We begin with the raw amino-acid sequence, 358 residues long: Protein RecA (358 aa).

66–73 (GPESSGKT) serves as a coordination point for ATP.

The protein belongs to the RecA family.

The protein resides in the cytoplasm. In terms of biological role, can catalyze the hydrolysis of ATP in the presence of single-stranded DNA, the ATP-dependent uptake of single-stranded DNA by duplex DNA, and the ATP-dependent hybridization of homologous single-stranded DNAs. It interacts with LexA causing its activation and leading to its autocatalytic cleavage. This chain is Protein RecA, found in Herpetosiphon aurantiacus (strain ATCC 23779 / DSM 785 / 114-95).